The sequence spans 184 residues: UPF0301 protein Sden_2674 (184 aa).

This sequence belongs to the UPF0301 (AlgH) family.

The sequence is that of UPF0301 protein Sden_2674 from Shewanella denitrificans (strain OS217 / ATCC BAA-1090 / DSM 15013).